The sequence spans 444 residues: uncharacterized protein (444 aa).

Residues 1-72 constitute a chloroplast transit peptide; that stretch reads MGFLTAAIRV…RPMWNVSFLR (72 aa). Residues 77-107 are disordered; that stretch reads HSTPARETGDDDISKSENSSSQDGDSCTKLK. Residues 92-101 are compositionally biased toward polar residues; it reads SENSSSQDGD. A CRM domain is found at 175 to 272; sequence EILTPEEHFY…KNYVQPPTEI (98 aa). Residues 292-355 adopt a coiled-coil conformation; sequence DALRAVRKYI…CLEDEQEEDE (64 aa). 2 disordered regions span residues 344–364 and 392–426; these read EECL…ATDS and KFPA…PNFD. Over residues 346–357 the composition is skewed to acidic residues; the sequence is CLEDEQEEDEAG. Basic and acidic residues predominate over residues 406–426; sequence DLGKAKSEGEENDDDKSPNFD.

The protein resides in the plastid. Its subcellular location is the chloroplast. This is an uncharacterized protein from Arabidopsis thaliana (Mouse-ear cress).